Here is a 317-residue protein sequence, read N- to C-terminus: uncharacterized protein (317 aa).

The next 7 helical transmembrane spans lie at 24-44 (ISII…TGIM), 63-83 (LSIS…SILA), 136-156 (LGVA…ISED), 187-207 (LIPI…IGFF), 229-249 (ILAL…GGFL), 252-272 (GILS…LTFS), and 295-315 (IVMV…AGLL).

To M.jannaschii MJ0880, MJ1556 and MJ1589.

Its subcellular location is the cell membrane. This is an uncharacterized protein from Methanocaldococcus jannaschii (strain ATCC 43067 / DSM 2661 / JAL-1 / JCM 10045 / NBRC 100440) (Methanococcus jannaschii).